The following is a 360-amino-acid chain: Peptide chain release factor 1 (360 aa).

At Gln-237 the chain carries N5-methylglutamine.

It belongs to the prokaryotic/mitochondrial release factor family. In terms of processing, methylated by PrmC. Methylation increases the termination efficiency of RF1.

The protein localises to the cytoplasm. In terms of biological role, peptide chain release factor 1 directs the termination of translation in response to the peptide chain termination codons UAG and UAA. This chain is Peptide chain release factor 1, found in Pseudomonas fluorescens (strain ATCC BAA-477 / NRRL B-23932 / Pf-5).